A 745-amino-acid polypeptide reads, in one-letter code: MVKVSNLGYPRLGEQREWKQAIEAFWAGNLEQKDLEKQLKQLRINHLKKQKEAGIDLIPVGDFSCYDHVLDLSFQFNVIPKRFDEYERNLDLYFAIARGDKDNVASSMKKWFNTNYHYIVPEWEVETKPHLQNNYLLDLYLEAREVVGDKAKPVITGPITYVSLSSGIVDFEATVQRLLPLYKQVFQDLIDAGATYIQIDEPIFVTDEGELLVDIAKSVYDFFAREVPQAHFIFQTYFESAVCLDKLSKLPVTGFGLDFIHGRAENLAAVKQGLFREKELFAGIVNGRNIWAVNLEETLALLEEIGPFVKRLTLQPSSSLLHVPVTTKYETHLDPVLKNGLSFADEKLKELELLASAFDGNKTKGYHEALSRFSALQAADFRHVALESLAEVKLERSPYKLRQALQAEKLQLPILPTTTIGSFPQSPEIRKKRLAWKRGNLSDSDYKDFIKTEIRRWIAIQEDLDLDVLVHGEFERVDMVEFFGQKLAGFTTTKLGWVQSYGSRAVKPPIIYGDVKHIQPLSLEETVYAQSLTKKPVKGMLTGPITITNWSFERDDISRSDLFNQIALAIKDEIQLLEQSGIAIIQVDEAALREGLPLRQQKQQAYLDDAVAAFKIATSSVKDETQIHTHMCYSKFDEIIDSIRALDADVISIETSRSHGDIIESFETAVYPLGIGLGVYDIHSPRIPTKEEIIVNIQRSLKCLSKEQFWVNPDCGLKTRREAETIAALEVLVSATKEVRQQLDN.

5-methyltetrahydropteroyltri-L-glutamate is bound by residues 16–19 (REWK) and K110. L-homocysteine-binding positions include 420-422 (IGS) and E473. Residues 420–422 (IGS) and E473 contribute to the L-methionine site. 5-methyltetrahydropteroyltri-L-glutamate is bound at residue W550. D588 contributes to the L-homocysteine binding site. D588 lines the L-methionine pocket. E594 is a binding site for 5-methyltetrahydropteroyltri-L-glutamate. Zn(2+) is bound by residues H630, C632, and E654. Catalysis depends on H683, which acts as the Proton donor. Residue C715 participates in Zn(2+) binding.

This sequence belongs to the vitamin-B12 independent methionine synthase family. Zn(2+) is required as a cofactor.

It catalyses the reaction 5-methyltetrahydropteroyltri-L-glutamate + L-homocysteine = tetrahydropteroyltri-L-glutamate + L-methionine. It participates in amino-acid biosynthesis; L-methionine biosynthesis via de novo pathway; L-methionine from L-homocysteine (MetE route): step 1/1. Catalyzes the transfer of a methyl group from 5-methyltetrahydrofolate to homocysteine resulting in methionine formation. This is 5-methyltetrahydropteroyltriglutamate--homocysteine methyltransferase from Streptococcus agalactiae serotype III (strain NEM316).